The chain runs to 176 residues: Nucleoside triphosphate/diphosphate phosphatase (176 aa).

The active-site Proton donor is R23. Mg(2+) is bound by residues N87, D103, D105, D107, D120, and E123.

The protein belongs to the Ntdp family. Mg(2+) is required as a cofactor.

It carries out the reaction a ribonucleoside 5'-triphosphate + H2O = a ribonucleoside 5'-diphosphate + phosphate + H(+). It catalyses the reaction a ribonucleoside 5'-diphosphate + H2O = a ribonucleoside 5'-phosphate + phosphate + H(+). Functionally, has nucleoside phosphatase activity towards nucleoside triphosphates and nucleoside diphosphates. This Lactococcus lactis subsp. cremoris (strain MG1363) protein is Nucleoside triphosphate/diphosphate phosphatase.